The sequence spans 187 residues: Large ribosomal subunit protein uL6 (187 aa).

Belongs to the universal ribosomal protein uL6 family. As to quaternary structure, part of the 50S ribosomal subunit.

In terms of biological role, this protein binds to the 23S rRNA, and is important in its secondary structure. It is located near the subunit interface in the base of the L7/L12 stalk, and near the tRNA binding site of the peptidyltransferase center. The chain is Large ribosomal subunit protein uL6 from Thermosynechococcus vestitus (strain NIES-2133 / IAM M-273 / BP-1).